A 778-amino-acid chain; its full sequence is Gelsolin (778 aa).

An N-terminal signal peptide occupies residues 1-23; sequence MGKQGFGYIFLTIFCTMALKLNC. Residues 49 to 172 form an actin-severing region; sequence MVEHAEFSKA…YKAGGVASGF (124 aa). The Gelsolin-like 1 repeat unit spans residues 72–154; the sequence is FDLVPVPKNL…VQGHESSTFL (83 aa). Residues Gly88, Asp89, Glu120, Asp132, Gly137, and Ala139 each coordinate Ca(2+). Residues 119 to 122 form an actin-actin interfilament contact point region; sequence DERG. Residue 158–165 coordinates a 1,2-diacyl-sn-glycero-3-phospho-(1D-myo-inositol-4,5-bisphosphate); that stretch reads KSGIKYKA. Ca(2+) is bound at residue Val168. 184–192 is an a 1,2-diacyl-sn-glycero-3-phospho-(1D-myo-inositol-4,5-bisphosphate) binding site; that stretch reads RLLQVKGRR. The stretch at 193–266 is one Gelsolin-like 2 repeat; that stretch reads TVRATEVPVS…SEEGAEREEM (74 aa). The Ca(2+) site is built by Gly209 and Asp210. Cys211 and Cys224 are oxidised to a cystine. 18 residues coordinate Ca(2+): Glu232, Asp282, Glu325, Asp326, Glu350, Gly467, Asp468, Glu498, Asp510, Gly515, Pro517, Thr547, Asn587, Asp588, Glu610, Asp692, Asp693, and Glu715. Gelsolin-like repeat units lie at residues 313–385 and 451–532; these read DENP…TPLF and SEKV…PHLM. Residues 430–778 are actin-binding, Ca-sensitive; sequence AAQHGMEDDG…LQRAMADVDV (349 aa). Gelsolin-like repeat units follow at residues 574–638 and 677–752; these read AVEL…DNFW and IEEV…PPTF.

Belongs to the villin/gelsolin family. Binds to actin and to fibronectin. Highly expressed in homogene cells of the basilar papilla. Also detected in subcutaneous layer of the skin.

It localises to the secreted. The protein resides in the cytoplasm. The protein localises to the cytoskeleton. Calcium-regulated, actin-modulating protein that binds to the plus (or barbed) ends of actin monomers or filaments, preventing monomer exchange (end-blocking or capping). It can promote the assembly of monomers into filaments (nucleation) as well as sever filaments already formed. Plays a role in ciliogenesis. The sequence is that of Gelsolin (GSN) from Gallus gallus (Chicken).